Here is a 359-residue protein sequence, read N- to C-terminus: DNA-directed RNA polymerase RPB3-11 homolog (359 aa).

The protein in the N-terminal section; belongs to the archaeal RpoD/eukaryotic RPB3 RNA polymerase subunit family. In the C-terminal section; belongs to the archaeal RpoL/eukaryotic RPB11/RPC19 RNA polymerase subunit family. As to quaternary structure, part of the viral DNA-directed RNA polymerase that consists of 8 polII-like subunits (RPB1, RPB2, RPB3, RPB5, RPB6, RPB7, RPB9, RPB10), a capping enzyme and a termination factor.

It is found in the host cytoplasm. Its subcellular location is the virion. Functionally, component of the DNA-directed RNA polymerase (RNAP) that catalyzes the transcription in the cytoplasm of viral DNA into RNA using the four ribonucleoside triphosphates as substrates. The chain is DNA-directed RNA polymerase RPB3-11 homolog from Ornithodoros (relapsing fever ticks).